The chain runs to 351 residues: Basic salivary proline-rich protein 3 (351 aa).

Residues 1–16 form the signal peptide; it reads MLLILLSVALLALSSA. Q17 carries the post-translational modification Pyrrolidone carboxylic acid. Residues 17–351 form a disordered region; the sequence is QSLNEDVSQE…HRPPQGQPPQ (335 aa). Residues 20–31 show a composition bias toward polar residues; that stretch reads NEDVSQEESPSV. S24 carries the post-translational modification Phosphoserine. 12 repeat units span residues 53 to 73, 74 to 94, 95 to 115, 116 to 136, 137 to 157, 158 to 178, 179 to 199, 200 to 220, 221 to 241, 242 to 261, 263 to 283, and 284 to 304. Residues 53 to 304 are 12 X 21 AA tandem repeats of [RHP]-P-G-K-P-[EQ]-G-[PQS]-P-[PS]-Q-[GE]-G-N-[QK]-[SP]-[QR]-[GR]-P-P-P; that stretch reads PPGKPEGRPP…EGNKPQRPPP (252 aa). The N-linked (GlcNAc...) asparagine glycan is linked to N66. Pro residues predominate over residues 70 to 84; it reads GPPPRPGKPEGPPPQ. N-linked (GlcNAc...) asparagine glycosylation is present at N87. Residue S89 is glycosylated (O-linked (Hex) serine). The segment covering 99-111 has biased composition (low complexity); sequence PEGQPPQGGNQSQ. N-linked (GlcNAc...) asparagine glycosylation occurs at N108. Positions 112–126 are enriched in pro residues; that stretch reads GPPPRPGKPEGPPPQ. N-linked (GlcNAc...) asparagine glycosylation occurs at N129. Pro residues predominate over residues 133–147; it reads GPPPRPGKPEGPPPQ. N150 carries N-linked (GlcNAc...) asparagine glycosylation. Pro residues-rich tracts occupy residues 154 to 168 and 175 to 189; these read GPPP…PPPQ. N-linked (GlcNAc...) asparagine glycosylation is present at N192. Residues 196 to 210 show a composition bias toward pro residues; it reads GPPPRPGKPEGPPPQ. N-linked (GlcNAc...) asparagine glycosylation is found at N213 and N234. Composition is skewed to pro residues over residues 217 to 252, 259 to 270, and 279 to 351; these read GPPP…PPPQ, GPPPRPGKPEGP, and QGPP…QPPQ. An N-linked (Hex) asparagine; atypical glycan is attached at N297.

Post-translationally, N- and O-glycosylated; contains about 50% carbohydrate. This is composed of highly fucosylated N-linked saccharides, the major structure is a biantennary asialosaccharide containing 2 fucose residues on one antenna and an unsubstituted terminal lactosamine sequence on the other. The Gram-negative bacterium F.nucleatum binds to carbohydrates containing unsubstituted GalBeta1,4GlcNAc residues. N-glycosylation on Asn-87 is prevalent in head and neck cancer patients. Proteolytically cleaved at the tripeptide Xaa-Pro-Gln, where Xaa in the P(3) position is mostly lysine. The endoprotease may be of microbial origin. Besides on the N-terminal of mature PRB3, pyroglutamate formation found on at least Gln-67, Gln-88, Gln-256 and Gln-337.

The protein localises to the secreted. Functionally, acts as a receptor for the Gram-negative bacterium F.nucleatum. This Homo sapiens (Human) protein is Basic salivary proline-rich protein 3 (PRB3).